The chain runs to 133 residues: UPF0134 protein MPN_151 (133 aa).

The protein belongs to the UPF0134 family.

This Mycoplasma pneumoniae (strain ATCC 29342 / M129 / Subtype 1) (Mycoplasmoides pneumoniae) protein is UPF0134 protein MPN_151.